The chain runs to 374 residues: DNA/RNA-binding protein ALBA4 (374 aa).

It belongs to the histone-like Alba family.

The protein localises to the cytoplasm. It is found in the cell cortex. The protein resides in the perinuclear region. Possesses DNA- and RNA-binding activities. Binds to DNA with relaxed sequence specificity. May associate with the subtelomeric TARE6 repeats. Regulates the abundance of transcript sub-populations in a stage-specific manner. Regulates activation of male gametocytes. Participates in the coordination of sporozoite development in the oocyst. The polypeptide is DNA/RNA-binding protein ALBA4 (Plasmodium yoelii yoelii).